The sequence spans 117 residues: Hemerythrin subunit beta (117 aa).

The Fe cation site is built by H24, H53, E57, H72, H76, H105, and D110.

Belongs to the hemerythrin family. In terms of assembly, octamer composed of two types of chains: alpha and beta.

In terms of biological role, hemerythrin is a respiratory protein in blood cells of certain marine worms. The oxygen-binding site in each chain contains two iron atoms. This is Hemerythrin subunit beta from Lingula anatina (Brachiopod).